The following is a 215-amino-acid chain: Guanylate kinase (215 aa).

Residues 11–189 (GNVFMVVAPS…ALTELVQIIS (179 aa)) enclose the Guanylate kinase-like domain. 18 to 25 (APSGAGKS) lines the ATP pocket.

The protein belongs to the guanylate kinase family.

The protein localises to the cytoplasm. The catalysed reaction is GMP + ATP = GDP + ADP. Functionally, essential for recycling GMP and indirectly, cGMP. The sequence is that of Guanylate kinase from Bordetella bronchiseptica (strain ATCC BAA-588 / NCTC 13252 / RB50) (Alcaligenes bronchisepticus).